Consider the following 427-residue polypeptide: Glutamate-1-semialdehyde 2,1-aminomutase (427 aa).

Residue Lys265 is modified to N6-(pyridoxal phosphate)lysine.

The protein belongs to the class-III pyridoxal-phosphate-dependent aminotransferase family. HemL subfamily. As to quaternary structure, homodimer. It depends on pyridoxal 5'-phosphate as a cofactor.

Its subcellular location is the cytoplasm. It carries out the reaction (S)-4-amino-5-oxopentanoate = 5-aminolevulinate. The protein operates within porphyrin-containing compound metabolism; protoporphyrin-IX biosynthesis; 5-aminolevulinate from L-glutamyl-tRNA(Glu): step 2/2. This Bordetella avium (strain 197N) protein is Glutamate-1-semialdehyde 2,1-aminomutase.